The chain runs to 146 residues: Hemoglobin subunit beta (146 aa).

V1 is modified (N-acetylvaline). In terms of domain architecture, Globin spans 2–146; the sequence is HLTGEEKSLV…VANALAHKYH (145 aa). T12 carries the phosphothreonine modification. S44 is subject to Phosphoserine. K59 is subject to N6-acetyllysine. H63 contributes to the heme b binding site. K82 carries the N6-acetyllysine modification. H92 provides a ligand contact to heme b. The residue at position 93 (C93) is an S-nitrosocysteine. K144 bears the N6-acetyllysine mark.

It belongs to the globin family. In terms of assembly, heterotetramer of two alpha chains and two beta chains. As to expression, red blood cells.

In terms of biological role, involved in oxygen transport from the lung to the various peripheral tissues. This is Hemoglobin subunit beta (HBB) from Ursus maritimus (Polar bear).